A 152-amino-acid polypeptide reads, in one-letter code: MEQNEQPVFGIEKLYVKDLSVEVPNAPEIFLEREQPQVEIQLNTGGRAVGDGVYEVVLTVTVTAKMPEKTVFLVEVGQAGIFRIQNVPEEQLEPLIAVACPNILFPYAREAVSDAVSRAGFQPIVLQPVNFEGMYMQRLQEQAGAPAEVPIQ.

It belongs to the SecB family. As to quaternary structure, homotetramer, a dimer of dimers. One homotetramer interacts with 1 SecA dimer.

It localises to the cytoplasm. Its function is as follows. One of the proteins required for the normal export of preproteins out of the cell cytoplasm. It is a molecular chaperone that binds to a subset of precursor proteins, maintaining them in a translocation-competent state. It also specifically binds to its receptor SecA. The polypeptide is Protein-export protein SecB (Dechloromonas aromatica (strain RCB)).